A 369-amino-acid polypeptide reads, in one-letter code: Glycolate oxidase 1 (369 aa).

One can recognise an FMN hydroxy acid dehydrogenase domain in the interval 1–360 (MGEITNVMEY…TRAHIYTDAD (360 aa)). Residue Y25 coordinates glyoxylate. FMN-binding positions include 78-80 (PSA), S107, 128-130 (QLY), and T156. Position 130 (Y130) interacts with glyoxylate. R165 lines the glyoxylate pocket. FMN is bound by residues K231 and S253. Glyoxylate is bound by residues H255 and R258. The Proton acceptor role is filled by H255. Residues 286 to 290 (DGGVR) and 309 to 310 (GR) contribute to the FMN site. The Microbody targeting signal motif lies at 367–369 (PRL).

It belongs to the FMN-dependent alpha-hydroxy acid dehydrogenase family. In terms of assembly, homotetramer. Interacts with rice dwarf virus (RDV) P8. This interaction promotes viral P8 relocation to virus factories peripheral to peroxisomes. The cofactor is FMN.

It is found in the peroxisome. It catalyses the reaction glycolate + O2 = glyoxylate + H2O2. Its pathway is photosynthesis; photorespiration; glycine from 2-phosphoglycolate: step 2/3. Its function is as follows. Catalyzes the oxidation of glycolate to glyoxylate, with a reduction of O2 to H2O2. Is a key enzyme in photorespiration in plants. Can exert a strong regulation over photosynthesis, possibly through a feed-back inhibition on Rubisco activase. Does not seem to play a role in oxalate accumulation. In Oryza sativa subsp. indica (Rice), this protein is Glycolate oxidase 1 (GLO1).